Consider the following 591-residue polypeptide: Heterogeneous nuclear ribonucleoprotein L-like (591 aa).

The tract at residues 1-120 is disordered; it reads MSSSSSSSPK…STEGGGSHHK (120 aa). Basic and acidic residues predominate over residues 20-31; it reads FESQAKRLKTEE. Residue Lys28 forms a Glycyl lysine isopeptide (Lys-Gly) (interchain with G-Cter in SUMO2) linkage. Ser37 carries the phosphoserine modification. Residue Thr48 is modified to Phosphothreonine. Residues 57 to 73 are compositionally biased toward gly residues; it reads SGGGDGGDGDGGSGGGG. Residues 74 to 91 are compositionally biased toward acidic residues; it reads DGEEGEGGEEGDEGDGDE. Residues 92 to 105 show a composition bias toward gly residues; the sequence is GGSGGDEGGSGGGP. A phosphoserine mark is found at Ser107, Ser117, and Ser124. RRM domains lie at 125–199, 215–293, and 384–458; these read PVVH…YSTS, NKVL…YARP, and SVVM…VSKQ. A Glycyl lysine isopeptide (Lys-Gly) (interchain with G-Cter in SUMO2) cross-link involves residue Lys540.

As to quaternary structure, interacts with HNRNPL.

RNA-binding protein that functions as a regulator of alternative splicing for multiple target mRNAs, including PTPRC/CD45 and STAT5A. Required for alternative splicing of PTPRC. The sequence is that of Heterogeneous nuclear ribonucleoprotein L-like (Hnrnpll) from Mus musculus (Mouse).